We begin with the raw amino-acid sequence, 142 residues long: Cell division protein SepF (142 aa).

The protein belongs to the SepF family. Homodimer. Interacts with FtsZ.

Its subcellular location is the cytoplasm. Cell division protein that is part of the divisome complex and is recruited early to the Z-ring. Probably stimulates Z-ring formation, perhaps through the cross-linking of FtsZ protofilaments. Its function overlaps with FtsA. This Syntrophomonas wolfei subsp. wolfei (strain DSM 2245B / Goettingen) protein is Cell division protein SepF.